Here is a 613-residue protein sequence, read N- to C-terminus: Portal protein (613 aa).

The tract at residues 577-613 (ATGGDHGIRQAPSARGDAEPDHAKSKPARDPPPGAGS) is disordered. Basic and acidic residues predominate over residues 592–605 (GDAEPDHAKSKPAR).

Belongs to the herpesviridae portal protein family. Homododecamerizes. Interacts with terminase subunits TRM1 and TRM3.

It is found in the virion. It localises to the host nucleus. Its function is as follows. Forms a portal in the viral capsid through which viral DNA is translocated during DNA packaging. Assembles as a dodecamer at a single fivefold axe of the T=16 icosahedric capsid. Binds to the molecular motor that translocates the viral DNA, termed terminase. This is Portal protein from Homo sapiens (Human).